The following is a 681-amino-acid chain: DNA ligase (681 aa).

Residues 42-46, 91-92, and Glu-120 contribute to the NAD(+) site; these read DAEYD and SL. Catalysis depends on Lys-122, which acts as the N6-AMP-lysine intermediate. 4 residues coordinate NAD(+): Arg-143, Glu-180, Lys-302, and Lys-326. Residues Cys-420, Cys-423, Cys-438, and Cys-444 each coordinate Zn(2+). Residues 603–681 enclose the BRCT domain; it reads ADAQPLLGQT…EAGLIELIGL (79 aa).

Belongs to the NAD-dependent DNA ligase family. LigA subfamily. The cofactor is Mg(2+). Mn(2+) is required as a cofactor.

The catalysed reaction is NAD(+) + (deoxyribonucleotide)n-3'-hydroxyl + 5'-phospho-(deoxyribonucleotide)m = (deoxyribonucleotide)n+m + AMP + beta-nicotinamide D-nucleotide.. In terms of biological role, DNA ligase that catalyzes the formation of phosphodiester linkages between 5'-phosphoryl and 3'-hydroxyl groups in double-stranded DNA using NAD as a coenzyme and as the energy source for the reaction. It is essential for DNA replication and repair of damaged DNA. The chain is DNA ligase from Shewanella amazonensis (strain ATCC BAA-1098 / SB2B).